We begin with the raw amino-acid sequence, 394 residues long: Quinolinate synthase (394 aa).

Residues H57 and S74 each contribute to the iminosuccinate site. C121 serves as a coordination point for [4Fe-4S] cluster. Iminosuccinate-binding positions include Y153–N155 and S174. [4Fe-4S] cluster is bound at residue C243. Residues H269–E271 and T286 contribute to the iminosuccinate site. C333 lines the [4Fe-4S] cluster pocket.

This sequence belongs to the quinolinate synthase family. Type 3 subfamily. [4Fe-4S] cluster serves as cofactor.

The protein localises to the cytoplasm. It catalyses the reaction iminosuccinate + dihydroxyacetone phosphate = quinolinate + phosphate + 2 H2O + H(+). Its pathway is cofactor biosynthesis; NAD(+) biosynthesis; quinolinate from iminoaspartate: step 1/1. In terms of biological role, catalyzes the condensation of iminoaspartate with dihydroxyacetone phosphate to form quinolinate. The polypeptide is Quinolinate synthase (Corynebacterium glutamicum (strain ATCC 13032 / DSM 20300 / JCM 1318 / BCRC 11384 / CCUG 27702 / LMG 3730 / NBRC 12168 / NCIMB 10025 / NRRL B-2784 / 534)).